We begin with the raw amino-acid sequence, 1620 residues long: Probable serine/threonine-protein kinase gdt4 (1620 aa).

The signal sequence occupies residues 1–19 (MKLEQRIFFLICLVINSFS). The Extracellular portion of the chain corresponds to 20 to 891 (NCSLLVAPDG…EVIGINEQLN (872 aa)). Residues 892–912 (ILAIVLPITISLFAAASILAG) traverse the membrane as a helical segment. At 913–1620 (YLVIKKYKKP…AKRNKKNQNQ (708 aa)) the chain is on the cytoplasmic side. In terms of domain architecture, Protein kinase spans 1349-1604 (IVLEKYLSEG…TLIDLLEKLL (256 aa)). ATP contacts are provided by residues 1355-1363 (LSEGSFGVV) and Lys-1376. Catalysis depends on Asp-1466, which acts as the Proton acceptor.

In the N-terminal section; belongs to the GDT family. The protein in the C-terminal section; belongs to the protein kinase superfamily. TKL Ser/Thr protein kinase family.

The protein resides in the membrane. The enzyme catalyses L-seryl-[protein] + ATP = O-phospho-L-seryl-[protein] + ADP + H(+). It carries out the reaction L-threonyl-[protein] + ATP = O-phospho-L-threonyl-[protein] + ADP + H(+). The sequence is that of Probable serine/threonine-protein kinase gdt4 (gdt4) from Dictyostelium discoideum (Social amoeba).